The chain runs to 1176 residues: Pesticidal crystal protein Cry1Aa (1176 aa).

The protein belongs to the delta endotoxin family.

Promotes colloidosmotic lysis by binding to the midgut epithelial cells of many lepidopteran larvae. The polypeptide is Pesticidal crystal protein Cry1Aa (cry1Aa) (Bacillus thuringiensis subsp. entomocidus).